Reading from the N-terminus, the 367-residue chain is 2,6-dihydropseudooxynicotine hydrolase (367 aa).

Catalysis depends on residues Glu-148, Ser-217, Asp-300, and His-329.

It belongs to the AB hydrolase superfamily. In terms of assembly, homodimer.

It carries out the reaction 2,6-dihydroxypseudooxynicotine + H2O = 2,6-dihydroxypyridine + 4-(methylamino)butanoate + H(+). It functions in the pathway alkaloid degradation; nicotine degradation; 2,6-dihydroxypyridine and 4-(methylamino)butanoate from 6-hydroxypseudooxynicotine: step 2/2. Its function is as follows. L-nicotine is used as a growth substrate. Plays a role in nicotine catabolism by cleaving a C-C bond in 2,6-dihydroxypseudooxynicotine. The polypeptide is 2,6-dihydropseudooxynicotine hydrolase (Paenarthrobacter nicotinovorans (Arthrobacter nicotinovorans)).